The chain runs to 540 residues: Ribonuclease Y (540 aa).

The helical transmembrane segment at 4-24 threads the bilayer; the sequence is TILVPVAVAIVSVLVGGCAGY. The 64-residue stretch at 230 to 293 folds into the KH domain; it reads TVSVVNLPND…EIAKRALERL (64 aa). Residues 356–449 enclose the HD domain; sequence VLSHSIEVGK…VVAADTISSA (94 aa).

This sequence belongs to the RNase Y family.

It is found in the cell membrane. Functionally, endoribonuclease that initiates mRNA decay. This chain is Ribonuclease Y, found in Lactobacillus gasseri (strain ATCC 33323 / DSM 20243 / BCRC 14619 / CIP 102991 / JCM 1131 / KCTC 3163 / NCIMB 11718 / NCTC 13722 / AM63).